A 234-amino-acid polypeptide reads, in one-letter code: MAERGYSFSLTTFSPSGKLVQIEYALAAVAAGAPSVGIKATNGVVLATEKKQKSILYDEQSAHKVEPITKHIGMVYSGMGPDYRVLVRRARKLAQQYYLVYQEPIPTAQLVQRVASVMQEYTQSGGVRPFGVSLLIAGWDEGRPYLFQSDPSGAYFAWKATAMGKNYVNGKTFLEKRYNEDLELEDAIHTAILTLKESFEGQMTEDNIEVGICNEAGFKRLTPAEVKDYLAAIA.

At A2 the chain carries N-acetylalanine. Residue Y121 is modified to Phosphotyrosine.

The protein belongs to the peptidase T1A family. The 26S proteasome consists of a 20S proteasome core and two 19S regulatory subunits. The 20S proteasome core is a barrel-shaped complex made of 28 subunits that are arranged in four stacked rings. The two outer rings are each formed by seven alpha subunits, and the two inner rings are formed by seven beta subunits. The proteolytic activity is exerted by three beta-subunits PSMB5, PSMB6 and PSMB7.

Its subcellular location is the cytoplasm. The protein resides in the nucleus. In terms of biological role, component of the 20S core proteasome complex involved in the proteolytic degradation of most intracellular proteins. This complex plays numerous essential roles within the cell by associating with different regulatory particles. Associated with two 19S regulatory particles, forms the 26S proteasome and thus participates in the ATP-dependent degradation of ubiquitinated proteins. The 26S proteasome plays a key role in the maintenance of protein homeostasis by removing misfolded or damaged proteins that could impair cellular functions, and by removing proteins whose functions are no longer required. Associated with the PA200 or PA28, the 20S proteasome mediates ubiquitin-independent protein degradation. This type of proteolysis is required in several pathways including spermatogenesis (20S-PA200 complex) or generation of a subset of MHC class I-presented antigenic peptides (20S-PA28 complex). This is Proteasome subunit alpha type-2 (psma2) from Xenopus laevis (African clawed frog).